The primary structure comprises 174 residues: Cytochrome c-type biogenesis protein CcmE (174 aa).

The Cytoplasmic segment spans residues 1-7 (MTRKSRR). Residues 8 to 28 (LILIGAGLGVLALAAGLILTA) traverse the membrane as a helical; Signal-anchor for type II membrane protein segment. Topologically, residues 29–174 (LNDTIVFFRT…PAVSPARSTP (146 aa)) are periplasmic. Residues histidine 121 and tyrosine 125 each coordinate heme. A compositionally biased stretch (basic and acidic residues) spans 130–144 (VADALKKSGHWKEGE). The disordered stretch occupies residues 130–174 (VADALKKSGHWKEGEEGGPVPPAAKTPGPQSSAAPPAVSPARSTP). Over residues 156–174 (PGPQSSAAPPAVSPARSTP) the composition is skewed to low complexity.

The protein belongs to the CcmE/CycJ family.

The protein resides in the cell inner membrane. Heme chaperone required for the biogenesis of c-type cytochromes. Transiently binds heme delivered by CcmC and transfers the heme to apo-cytochromes in a process facilitated by CcmF and CcmH. This chain is Cytochrome c-type biogenesis protein CcmE, found in Azorhizobium caulinodans (strain ATCC 43989 / DSM 5975 / JCM 20966 / LMG 6465 / NBRC 14845 / NCIMB 13405 / ORS 571).